A 340-amino-acid polypeptide reads, in one-letter code: GPALPP motifs-containing protein 1 (340 aa).

A disordered region spans residues 1–304; it reads MARDLIGPAL…PQERIPFDRD (304 aa). Alanine 2 is modified (N-acetylalanine). The GPALPP motif 1 motif lies at 7-12; that stretch reads GPALPP. Residue serine 28 is modified to Phosphoserine. Residues 32–37 carry the GPALPP motif 2 motif; it reads GPALPP. Positions 60–69 are enriched in acidic residues; that stretch reads GNQESEEDDS. Positions 92–97 match the GPALPP motif 3 motif; sequence GPALPP. At serine 105 the chain carries Phosphoserine. The segment covering 107–116 has biased composition (pro residues); the sequence is PRPIIGPALP. The GPALPP motif 4 signature appears at 112-117; it reads GPALPP. A compositionally biased stretch (basic and acidic residues) spans 124–133; that stretch reads QKSDKGRDDP. Residue threonine 138 is modified to Phosphothreonine. Phosphoserine occurs at positions 140 and 141. Basic and acidic residues-rich tracts occupy residues 163 to 187, 227 to 261, 269 to 279, and 287 to 304; these read EFEK…KPIV, PADR…KRLA, ESKRSESLMDI, and KAAE…FDRD. Lysine 271 is covalently cross-linked (Glycyl lysine isopeptide (Lys-Gly) (interchain with G-Cter in SUMO2)). Lysine 308 participates in a covalent cross-link: Glycyl lysine isopeptide (Lys-Gly) (interchain with G-Cter in SUMO2).

This Homo sapiens (Human) protein is GPALPP motifs-containing protein 1 (GPALPP1).